The primary structure comprises 491 residues: MNTQQLAKLRSIVPEMRRVRHIHFVGIGGAGMGGIAEVLANEGYQISGSDLAPNPVTQQLMNLGATIYFNHRPENVRDASVVVVSSAISADNPEIVAAHEARIPVIRRAEMLAELMRFRHGIAIAGTHGKTTTTAMVSSIYAEAGLDPTFVNGGLVKAAGVHARLGHGRYLIAEADESDASFLHLQPMVAIVTNIEADHMDTYQGDFENLKQTFINFLHNLPFYGRAVMCVDDPVIRELLPRVGRQTTTYGFNEDADVRVEDYQQIGPQGHFTLLRQDKEPMRVTLNAPGRHNALNAAAAVAVATEEGIDDEAILRALESFQGTGRRFDFLGEFPLEPVNGKSGTAMLVDDYGHHPTEVDATIKAARAGWPDKNLVMLFQPHRFTRTRDLYDDFANVLTQVDTLLMLEVYPAGEAPIPGADSRSLCRTIRGRGKIDPILVPDPAQVAEMLAPVLTGNDLILVQGAGNIGKIARSLAEIKLKPQTPEEEQHD.

Position 126–132 (126–132 (GTHGKTT)) interacts with ATP.

It belongs to the MurCDEF family.

It localises to the cytoplasm. It catalyses the reaction UDP-N-acetyl-alpha-D-muramate + L-alanine + ATP = UDP-N-acetyl-alpha-D-muramoyl-L-alanine + ADP + phosphate + H(+). Its pathway is cell wall biogenesis; peptidoglycan biosynthesis. Functionally, cell wall formation. This Escherichia coli (strain SE11) protein is UDP-N-acetylmuramate--L-alanine ligase.